A 710-amino-acid polypeptide reads, in one-letter code: Ribonuclease R (710 aa).

The 328-residue stretch at 246–573 (RKDLRDKVIV…VHRLLKLYLE (328 aa)) folds into the RNB domain. Positions 625-705 (GEVFNVVVTN…IRGEIDFVLV (81 aa)) constitute an S1 motif domain.

Belongs to the RNR ribonuclease family. RNase R subfamily.

It localises to the cytoplasm. The catalysed reaction is Exonucleolytic cleavage in the 3'- to 5'-direction to yield nucleoside 5'-phosphates.. Functionally, 3'-5' exoribonuclease that releases 5'-nucleoside monophosphates and is involved in maturation of structured RNAs. The protein is Ribonuclease R of Thermotoga maritima (strain ATCC 43589 / DSM 3109 / JCM 10099 / NBRC 100826 / MSB8).